The sequence spans 41 residues: Phospholipase A2 homolog nigroviriditoxin acidic subunit A (41 aa).

This sequence belongs to the phospholipase A2 family. Group II subfamily. D49 sub-subfamily. Nigroviriditoxin is a heterodimer of an acidic subunit A and a basic subunit B. Expressed by the venom gland.

The protein resides in the secreted. Functionally, heterodimer A-B: Nigroviriditoxin possesses phospholipase A2 (PLA2) activity. It consists of a non-covalent association of a basic PLA2 subunit B with a non-enzymatic subunit A. Subunit A: The acidic subunit of nigroviriditoxin probably is a heterotrimer of three disulfide-linked chains generated by post-translational maturation of a PLA2-like precursor. It appears to have no PLA2 activity of its own, instead inhibiting the catalytic activity of subunit B. It is not toxic to mice by itself but increases toxicity of subunit B. The sequence is that of Phospholipase A2 homolog nigroviriditoxin acidic subunit A from Bothriechis nigroviridis (Black-speckled palm pit viper).